The primary structure comprises 217 residues: Enolase-phosphatase E1 (217 aa).

Residues aspartate 9 and glutamate 11 each coordinate Mg(2+). Residues 112 to 113 and lysine 151 contribute to the substrate site; that span reads SS. A Mg(2+)-binding site is contributed by aspartate 176.

It belongs to the HAD-like hydrolase superfamily. MasA/MtnC family. As to quaternary structure, monomer. Mg(2+) is required as a cofactor.

Its subcellular location is the cytoplasm. The protein resides in the nucleus. It carries out the reaction 5-methylsulfanyl-2,3-dioxopentyl phosphate + H2O = 1,2-dihydroxy-5-(methylsulfanyl)pent-1-en-3-one + phosphate. Its pathway is amino-acid biosynthesis; L-methionine biosynthesis via salvage pathway; L-methionine from S-methyl-5-thio-alpha-D-ribose 1-phosphate: step 3/6. It participates in amino-acid biosynthesis; L-methionine biosynthesis via salvage pathway; L-methionine from S-methyl-5-thio-alpha-D-ribose 1-phosphate: step 4/6. Functionally, bifunctional enzyme that catalyzes the enolization of 2,3-diketo-5-methylthiopentyl-1-phosphate (DK-MTP-1-P) into the intermediate 2-hydroxy-3-keto-5-methylthiopentenyl-1-phosphate (HK-MTPenyl-1-P), which is then dephosphorylated to form the acireductone 1,2-dihydroxy-3-keto-5-methylthiopentene (DHK-MTPene). This Lachancea thermotolerans (strain ATCC 56472 / CBS 6340 / NRRL Y-8284) (Yeast) protein is Enolase-phosphatase E1.